We begin with the raw amino-acid sequence, 86 residues long: Sec-independent protein translocase protein TatA (86 aa).

Residues 1 to 21 (MGGISIWQLLIIAVIVVLLFG) traverse the membrane as a helical segment. The tract at residues 42–86 (AIGDDNQPQQAQKTSSDADFETKNITEKQSVAQSETSESKNKEQV) is disordered. Composition is skewed to polar residues over residues 47 to 58 (NQPQQAQKTSSD) and 68 to 77 (EKQSVAQSET).

This sequence belongs to the TatA/E family. The Tat system comprises two distinct complexes: a TatABC complex, containing multiple copies of TatA, TatB and TatC subunits, and a separate TatA complex, containing only TatA subunits. Substrates initially bind to the TatABC complex, which probably triggers association of the separate TatA complex to form the active translocon.

The protein localises to the cell inner membrane. Its function is as follows. Part of the twin-arginine translocation (Tat) system that transports large folded proteins containing a characteristic twin-arginine motif in their signal peptide across membranes. TatA could form the protein-conducting channel of the Tat system. The polypeptide is Sec-independent protein translocase protein TatA (Photorhabdus laumondii subsp. laumondii (strain DSM 15139 / CIP 105565 / TT01) (Photorhabdus luminescens subsp. laumondii)).